The following is a 193-amino-acid chain: NADH-quinone oxidoreductase subunit B (193 aa).

[4Fe-4S] cluster contacts are provided by Cys72, Cys73, Cys137, and Cys167.

This sequence belongs to the complex I 20 kDa subunit family. As to quaternary structure, NDH-1 is composed of 14 different subunits. Subunits NuoB, C, D, E, F, and G constitute the peripheral sector of the complex. The cofactor is [4Fe-4S] cluster.

It localises to the cell inner membrane. It carries out the reaction a quinone + NADH + 5 H(+)(in) = a quinol + NAD(+) + 4 H(+)(out). NDH-1 shuttles electrons from NADH, via FMN and iron-sulfur (Fe-S) centers, to quinones in the respiratory chain. The immediate electron acceptor for the enzyme in this species is believed to be ubiquinone. Couples the redox reaction to proton translocation (for every two electrons transferred, four hydrogen ions are translocated across the cytoplasmic membrane), and thus conserves the redox energy in a proton gradient. The chain is NADH-quinone oxidoreductase subunit B from Bradyrhizobium sp. (strain ORS 278).